The following is a 183-amino-acid chain: Transcription factor 15 (183 aa).

The segment at 24–46 (DEENRSESDTSDQSYGCCEGAEA) is disordered. The region spanning 61–113 (KQRQAANARERDRTQSVNTAFTALRTLIPTEPVDRKLSKIETLRLASSYIAHL) is the bHLH domain.

In terms of assembly, heterodimer; efficient DNA binding requires dimerization with another bHLH protein.

The protein localises to the nucleus. Its function is as follows. Early transcription factor that plays a key role in somitogenesis, paraxial mesoderm development and regulation of stem cell pluripotency. Essential for the mesenchymal to epithelial transition associated with somite formation. Required for somite morphogenesis, thereby regulating patterning of the axial skeleton and skeletal muscles. Also plays a key role in regulation of stem cell pluripotency. Promotes pluripotency exit of embryonic stem cells (ESCs) by priming ESCs for differentiation. Acts as a key regulator of self-renewal of hematopoietic stem cells (HSCs) by mediating HSCs quiescence and long-term self-renewal. Acts by forming a heterodimer with another helix-loop-helix (bHLH) protein, that binds DNA on E-box motifs (5'-CANNTG-3') and activates transcription of target genes. This chain is Transcription factor 15 (TCF15), found in Gallus gallus (Chicken).